A 161-amino-acid chain; its full sequence is Regulator of ribonuclease activity A (161 aa).

Belongs to the RraA family. In terms of assembly, homotrimer. Binds to both RNA-binding sites in the C-terminal region of Rne and to RhlB.

The protein resides in the cytoplasm. In terms of biological role, globally modulates RNA abundance by binding to RNase E (Rne) and regulating its endonucleolytic activity. Can modulate Rne action in a substrate-dependent manner by altering the composition of the degradosome. Modulates RNA-binding and helicase activities of the degradosome. This chain is Regulator of ribonuclease activity A, found in Erwinia tasmaniensis (strain DSM 17950 / CFBP 7177 / CIP 109463 / NCPPB 4357 / Et1/99).